A 621-amino-acid chain; its full sequence is Proton pump-interactor BIP131 (621 aa).

Residues I250–T305 are a coiled coil. Basic and acidic residues predominate over residues S374–I387. Residues S374 to P572 are disordered. The segment covering K430 to P441 has biased composition (low complexity). The span at P448–K516 shows a compositional bias: basic and acidic residues. A coiled-coil region spans residues E466–T524. The chain crosses the membrane as a helical span at residues W589–Y609.

This sequence belongs to the plant proton pump-interactor protein family. In terms of assembly, interacts with BRI1.

Its subcellular location is the cell membrane. Its function is as follows. May regulate plasma membrane ATPase activity. In Oryza sativa subsp. japonica (Rice), this protein is Proton pump-interactor BIP131.